A 512-amino-acid chain; its full sequence is UDP-N-acetylmuramate--L-alanine ligase (512 aa).

Residue 132 to 138 (GAHGKTT) coordinates ATP.

Belongs to the MurCDEF family.

The protein resides in the cytoplasm. The catalysed reaction is UDP-N-acetyl-alpha-D-muramate + L-alanine + ATP = UDP-N-acetyl-alpha-D-muramoyl-L-alanine + ADP + phosphate + H(+). It functions in the pathway cell wall biogenesis; peptidoglycan biosynthesis. Cell wall formation. This chain is UDP-N-acetylmuramate--L-alanine ligase, found in Bifidobacterium longum subsp. infantis (strain ATCC 15697 / DSM 20088 / JCM 1222 / NCTC 11817 / S12).